A 431-amino-acid polypeptide reads, in one-letter code: Enolase (431 aa).

A (2R)-2-phosphoglycerate-binding site is contributed by Gln-167. Glu-209 functions as the Proton donor in the catalytic mechanism. Mg(2+) is bound by residues Asp-246, Glu-289, and Asp-316. (2R)-2-phosphoglycerate contacts are provided by Lys-341, Arg-370, Ser-371, and Lys-392. The active-site Proton acceptor is the Lys-341.

Belongs to the enolase family. Component of the RNA degradosome, a multiprotein complex involved in RNA processing and mRNA degradation. It depends on Mg(2+) as a cofactor.

The protein localises to the cytoplasm. Its subcellular location is the secreted. It localises to the cell surface. The catalysed reaction is (2R)-2-phosphoglycerate = phosphoenolpyruvate + H2O. The protein operates within carbohydrate degradation; glycolysis; pyruvate from D-glyceraldehyde 3-phosphate: step 4/5. Its function is as follows. Catalyzes the reversible conversion of 2-phosphoglycerate (2-PG) into phosphoenolpyruvate (PEP). It is essential for the degradation of carbohydrates via glycolysis. The polypeptide is Enolase (Shewanella baltica (strain OS155 / ATCC BAA-1091)).